A 132-amino-acid chain; its full sequence is Ribosome-binding factor A (132 aa).

It belongs to the RbfA family. Monomer. Binds 30S ribosomal subunits, but not 50S ribosomal subunits or 70S ribosomes.

Its subcellular location is the cytoplasm. One of several proteins that assist in the late maturation steps of the functional core of the 30S ribosomal subunit. Associates with free 30S ribosomal subunits (but not with 30S subunits that are part of 70S ribosomes or polysomes). Required for efficient processing of 16S rRNA. May interact with the 5'-terminal helix region of 16S rRNA. The protein is Ribosome-binding factor A of Edwardsiella ictaluri (strain 93-146).